A 204-amino-acid chain; its full sequence is Rho GDP-dissociation inhibitor 1 (204 aa).

The interval 1–36 (MAEQEPTAEQLAQIAAENEEDEHSVNYKPPAQKSIQ) is disordered. Residue A2 is modified to N-acetylalanine. S34 carries the post-translational modification Phosphoserine. Position 43 is an N6-acetyllysine (K43). S47 bears the Phosphoserine mark. 2 positions are modified to N6-acetyllysine: K105 and K127. Residues K138 and K141 each participate in a glycyl lysine isopeptide (Lys-Gly) (interchain with G-Cter in SUMO1); alternate cross-link. Glycyl lysine isopeptide (Lys-Gly) (interchain with G-Cter in SUMO2); alternate cross-links involve residues K138 and K141. K141 bears the N6-acetyllysine; alternate mark. The residue at position 141 (K141) is an N6-succinyllysine; alternate. An N6-acetyllysine modification is found at K178.

Belongs to the Rho GDI family. As to quaternary structure, monomer. Interacts with FER. Interacts with PLXNB3. Forms a heterodimer with RAC1. Interacts with RHOA, the affinity is increased by three orders of magnitude when RHOA is prenylated. Interacts with PSMD10; the interaction increases ARHGDIA association with RHOA, leading to ARHGDIA-mediated inactivation of RHOA and ROCK and prolonged AKT activation. Interacts with KANK2; the interaction is direct and may regulate the interaction of ARHGDIA with RHOA, RAC1 and CDC42. Interacts with RHOC. Interacts with CDC42. Interacts with NGFR (via death domain); NGFR binding decreases the affinity for RHOA.

It is found in the cytoplasm. In terms of biological role, controls Rho proteins homeostasis. Regulates the GDP/GTP exchange reaction of the Rho proteins by inhibiting the dissociation of GDP from them, and the subsequent binding of GTP to them. Retains Rho proteins such as CDC42, RAC1 and RHOA in an inactive cytosolic pool, regulating their stability and protecting them from degradation. Actively involved in the recycling and distribution of activated Rho GTPases in the cell, mediates extraction from membranes of both inactive and activated molecules due its exceptionally high affinity for prenylated forms. Through the modulation of Rho proteins, may play a role in cell motility regulation. In glioma cells, inhibits cell migration and invasion by mediating the signals of SEMA5A and PLXNB3 that lead to inactivation of RAC1. The polypeptide is Rho GDP-dissociation inhibitor 1 (ARHGDIA) (Homo sapiens (Human)).